The sequence spans 145 residues: Protein cornichon homolog 1 (145 aa).

3 helical membrane-spanning segments follow: residues Phe5–Ile25, Ile57–Ala77, and Leu116–Ala136.

The protein belongs to the cornichon family. In terms of assembly, interacts with glr-1. As to expression, widely expressed in the nervous system including in the AVA interneurons.

Its subcellular location is the endoplasmic reticulum membrane. The protein localises to the synapse. It localises to the cell projection. It is found in the dendrite. Its function is as follows. Negatively regulates export of glr-1 from the endoplasmic reticulum to synapses. This chain is Protein cornichon homolog 1, found in Caenorhabditis elegans.